Consider the following 348-residue polypeptide: Quinone oxidoreductase-like protein 1 (348 aa).

The protein belongs to the zinc-containing alcohol dehydrogenase family. Quinone oxidoreductase subfamily. As to quaternary structure, component of the FERRY complex composed of five subunits, TBCK, PPP1R21, FERRY3, CRYZL1 and GATD1 with a ratio of 1:2:1:2:4, respectively.

The protein resides in the early endosome. Component of the FERRY complex (Five-subunit Endosomal Rab5 and RNA/ribosome intermediary). The FERRY complex directly interacts with mRNAs and RAB5A, and functions as a RAB5A effector involved in the localization and the distribution of specific mRNAs most likely by mediating their endosomal transport. The complex recruits mRNAs and ribosomes to early endosomes through direct mRNA-interaction. The protein is Quinone oxidoreductase-like protein 1 (Cryzl1) of Mus musculus (Mouse).